The primary structure comprises 33 residues: Phospholipase A2 homolog BmarPLA2 (33 aa).

The protein belongs to the phospholipase A2 family. Group II subfamily. K49 sub-subfamily. In terms of assembly, homodimer; non-covalently linked. Expressed by the venom gland.

Its subcellular location is the secreted. In terms of biological role, snake phospholipase A2 homolog that lacks enzymatic activity. May display myotoxin activity. In isolated heart decreases cardiac frequency. Also decreases mean arterial pressure. Does not show antimicrobial activity. Does not change renal parameters (such as perfusion pressure, renal vascular resistance, urinary flow, glomerular filtration rate and sodium tubular transport). This Bothrops marajoensis (Marajo lancehead) protein is Phospholipase A2 homolog BmarPLA2.